A 627-amino-acid polypeptide reads, in one-letter code: WPP domain-interacting tail-anchored protein 2 (627 aa).

Coiled coils occupy residues 81 to 152 (CGIL…RRTL), 188 to 218 (LEKS…KLHY), and 312 to 542 (TLRE…KILR). The disordered stretch occupies residues 577–597 (SLQEDERTREEPEKQSVSEKS). The segment covering 580-597 (EDERTREEPEKQSVSEKS) has biased composition (basic and acidic residues). The chain crosses the membrane as a helical span at residues 606 to 626 (LKHILVVALVFVLFCSFFGVT).

As to quaternary structure, component of Ran complexes at least composed of WIT1 or WIT2, RANGAP1 or RANGAP2, and WIP1 or WIP2 or WIP3. Interacts with KAKU1. Core component of the LINC complex which is composed of inner nuclear membrane SUN domain-containing proteins coupled to outer nuclear membrane WIP and WIT proteins. The LINC complex also involves nucleoskeletal proteins CRWN/LINC and possibly KAKU4 and the cytoskeletal myosin KAKU1. Interacts with WIP1, WIP2 and WIP3. Ubiquitous.

It is found in the membrane. Its function is as follows. Together with WIT1, required for the nuclear envelope docking of RANGAP proteins in root tips. Plays a role in nuclear shape determination. As component of the SUN-WIP-WIT2-KAKU1 complex, mediates the transfer of cytoplasmic forces to the nuclear envelope (NE), leading to nuclear shape changes. The polypeptide is WPP domain-interacting tail-anchored protein 2 (WIT2) (Arabidopsis thaliana (Mouse-ear cress)).